The primary structure comprises 667 residues: Bicarbonate transport ATP-binding protein CmpC (667 aa).

The region spanning 5 to 239 is the ABC transporter domain; that stretch reads VAVDNIDKVF…RPRKRMEVVE (235 aa). 42–49 is an ATP binding site; the sequence is GHSGCGKS. The tract at residues 281 to 667 is cmpA-like; that stretch reads LELGYVPLVA…DNPTPAPVFA (387 aa).

This sequence belongs to the ABC transporter superfamily. Nitrate/nitrite/cyanate uptake transporter (NitT) (TC 3.A.1.16) family. In terms of assembly, the complex is composed of two ATP-binding proteins (CmpC and CmpD), a transmembrane protein (CmpB) and a solute-binding protein (CmpA).

The protein resides in the cell inner membrane. In terms of biological role, part of the ABC transporter complex CmpABCD involved in bicarbonate transport. Responsible for energy coupling to the transport system. The chain is Bicarbonate transport ATP-binding protein CmpC (cmpC) from Synechocystis sp. (strain ATCC 27184 / PCC 6803 / Kazusa).